A 135-amino-acid chain; its full sequence is Hydroxylaminobenzene mutase HabA (135 aa).

The next 4 membrane-spanning stretches (helical) occupy residues Leu5–Val25, Val33–Tyr55, Phe67–Trp87, and Phe113–Ile133.

It is found in the cell membrane. The catalysed reaction is N-phenylhydroxylamine = 2-aminophenol. In terms of biological role, catalyzes the rearrangement of hydroxylaminobenzene to 2-aminophenol. Involved in the degradation of nitrobenzene. This chain is Hydroxylaminobenzene mutase HabA (habA), found in Ectopseudomonas oleovorans (Pseudomonas oleovorans).